Consider the following 293-residue polypeptide: Aspartate carbamoyltransferase catalytic subunit (293 aa).

Carbamoyl phosphate-binding residues include Arg50 and Thr51. Residue Lys78 participates in L-aspartate binding. Carbamoyl phosphate is bound by residues Arg100, His127, and Gln130. The L-aspartate site is built by Arg160 and Arg210. 2 residues coordinate carbamoyl phosphate: Ala253 and Pro254.

The protein belongs to the aspartate/ornithine carbamoyltransferase superfamily. ATCase family. As to quaternary structure, heterododecamer (2C3:3R2) of six catalytic PyrB chains organized as two trimers (C3), and six regulatory PyrI chains organized as three dimers (R2).

The catalysed reaction is carbamoyl phosphate + L-aspartate = N-carbamoyl-L-aspartate + phosphate + H(+). It participates in pyrimidine metabolism; UMP biosynthesis via de novo pathway; (S)-dihydroorotate from bicarbonate: step 2/3. Functionally, catalyzes the condensation of carbamoyl phosphate and aspartate to form carbamoyl aspartate and inorganic phosphate, the committed step in the de novo pyrimidine nucleotide biosynthesis pathway. The polypeptide is Aspartate carbamoyltransferase catalytic subunit (Staphylococcus aureus (strain USA300)).